Consider the following 427-residue polypeptide: Glutamate-1-semialdehyde 2,1-aminomutase (427 aa).

N6-(pyridoxal phosphate)lysine is present on lysine 265.

It belongs to the class-III pyridoxal-phosphate-dependent aminotransferase family. HemL subfamily. Homodimer. It depends on pyridoxal 5'-phosphate as a cofactor.

Its subcellular location is the cytoplasm. It catalyses the reaction (S)-4-amino-5-oxopentanoate = 5-aminolevulinate. The protein operates within porphyrin-containing compound metabolism; protoporphyrin-IX biosynthesis; 5-aminolevulinate from L-glutamyl-tRNA(Glu): step 2/2. The polypeptide is Glutamate-1-semialdehyde 2,1-aminomutase (Bordetella petrii (strain ATCC BAA-461 / DSM 12804 / CCUG 43448)).